A 292-amino-acid chain; its full sequence is 11-beta-hydroxysteroid dehydrogenase 1 (292 aa).

Residues methionine 1 to tyrosine 7 lie on the Cytoplasmic side of the membrane. The helical; Signal-anchor for type II membrane protein transmembrane segment at leucine 8 to asparagine 24 threads the bilayer. The Lumenal portion of the chain corresponds to glutamate 25–lysine 292. Residues glycine 41–serine 67, threonine 92–methionine 93, and asparagine 119–isoleucine 121 each bind NADP(+). Residues asparagine 123 and asparagine 162 are each glycosylated (N-linked (GlcNAc...) asparagine). Substrate is bound at residue serine 170. Catalysis depends on tyrosine 183, which acts as the Proton acceptor. Tyrosine 183–lysine 187 serves as a coordination point for NADP(+). Asparagine 207 carries N-linked (GlcNAc...) asparagine glycosylation. Residue isoleucine 218–threonine 222 coordinates NADP(+).

It belongs to the short-chain dehydrogenases/reductases (SDR) family. In terms of assembly, homodimer. Post-translationally, glycosylated. Widely expressed, highest expression in liver, lower in testis, ovary, lung, foreskin fibroblasts, and much lower in kidney. Expressed in liver (at protein level). Expressed in the basal cells of the corneal epithelium and in the ciliary nonpigmented epithelium (both at mRNA and at protein level).

It is found in the endoplasmic reticulum membrane. It catalyses the reaction an 11beta-hydroxysteroid + NADP(+) = an 11-oxosteroid + NADPH + H(+). The enzyme catalyses cortisone + NADPH + H(+) = cortisol + NADP(+). It carries out the reaction corticosterone + NADP(+) = 11-dehydrocorticosterone + NADPH + H(+). The catalysed reaction is a 7beta-hydroxysteroid + NADP(+) = a 7-oxosteroid + NADPH + H(+). It catalyses the reaction 7-oxocholesterol + NADPH + H(+) = 7beta-hydroxycholesterol + NADP(+). The enzyme catalyses chenodeoxycholate + NADP(+) = 7-oxolithocholate + NADPH + H(+). It carries out the reaction 7-oxolithocholate + NADPH + H(+) = ursodeoxycholate + NADP(+). The catalysed reaction is glycochenodeoxycholate + NADP(+) = 7-oxoglycolithocholate + NADPH + H(+). It catalyses the reaction taurochenodeoxycholate + NADP(+) = 7-oxotaurolithocholate + NADPH + H(+). The enzyme catalyses tauroursodeoxycholate + NADP(+) = 7-oxotaurolithocholate + NADPH + H(+). It carries out the reaction glycoursodeoxycholate + NADP(+) = 7-oxoglycolithocholate + NADPH + H(+). The catalysed reaction is 7-oxopregnenolone + NADPH + H(+) = 7beta-hydroxypregnenolone + NADP(+). It catalyses the reaction 3beta,7alpha-dihydroxyandrost-5-en-17-one + NADP(+) = 3beta-hydroxy-5-androstene-7,17-dione + NADPH + H(+). The enzyme catalyses 3beta-hydroxy-5-androstene-7,17-dione + NADPH + H(+) = 3beta,7beta-dihydroxyandrost-5-en-17-one + NADP(+). It carries out the reaction 3beta-hydroxy-5alpha-androstane-7,17-dione + NADPH + H(+) = 3beta,7beta-dihydroxy-5alpha-androstan-17-one + NADP(+). The protein operates within steroid metabolism. Its activity is regulated as follows. Hexose-6-phosphate dehydrogenase (H6PD) provides cosubstrate NADPH, and the glucose-6-phosphate transporter in the ER-membrane supplies the substrate for H6PDH, their activities stimulate the reduction of cortisone and abolish the oxidation of cortisol. Functionally, controls the reversible conversion of biologically active glucocorticoids such as cortisone to cortisol, and 11-dehydrocorticosterone to corticosterone in the presence of NADP(H). Participates in the corticosteroid receptor-mediated anti-inflammatory response, as well as metabolic and homeostatic processes. Plays a role in the secretion of aqueous humor in the eye, maintaining a normotensive, intraocular environment. Bidirectional in vitro, predominantly functions as a reductase in vivo, thereby increasing the concentration of active glucocorticoids. It has broad substrate specificity, besides glucocorticoids, it accepts other steroid and sterol substrates. Interconverts 7-oxo- and 7-hydroxy-neurosteroids such as 7-oxopregnenolone and 7beta-hydroxypregnenolone, 7-oxodehydroepiandrosterone (3beta-hydroxy-5-androstene-7,17-dione) and 7beta-hydroxydehydroepiandrosterone (3beta,7beta-dihydroxyandrost-5-en-17-one), among others. Catalyzes the stereo-specific conversion of the major dietary oxysterol, 7-ketocholesterol (7-oxocholesterol), into the more polar 7-beta-hydroxycholesterol metabolite. 7-oxocholesterol is one of the most important oxysterols, it participates in several events such as induction of apoptosis, accumulation in atherosclerotic lesions, lipid peroxidation, and induction of foam cell formation. Mediates the 7-oxo reduction of 7-oxolithocholate mainly to chenodeoxycholate, and to a lesser extent to ursodeoxycholate, both in its free form and when conjugated to glycine or taurine, providing a link between glucocorticoid activation and bile acid metabolism. Catalyzes the synthesis of 7-beta-25-dihydroxycholesterol from 7-oxo-25-hydroxycholesterol in vitro, which acts as a ligand for the G-protein-coupled receptor (GPCR) Epstein-Barr virus-induced gene 2 (EBI2) and may thereby regulate immune cell migration. The sequence is that of 11-beta-hydroxysteroid dehydrogenase 1 from Homo sapiens (Human).